We begin with the raw amino-acid sequence, 44 residues long: MGNPKKNSKDFAPNHIGTQSKKAGGNKGKQMQDQTGKQPIVDNG.

The interval 1 to 44 (MGNPKKNSKDFAPNHIGTQSKKAGGNKGKQMQDQTGKQPIVDNG) is disordered.

The protein belongs to the SspN family.

The protein resides in the spore core. This is Small, acid-soluble spore protein N from Bacillus anthracis (strain A0248).